We begin with the raw amino-acid sequence, 490 residues long: Protein lag-3 (490 aa).

Disordered regions lie at residues 18-55, 105-155, 213-235, 307-362, and 391-490; these read PSVAGMKPSTSKTTHSPPPEEPTAPFVNDNLPNPEDEP, EDEE…PTSE, SSADSIRSVPTPASSMHQPSPAE, SSSE…MQRI, and QQQQ…ANIN. Positions 105-119 are enriched in basic and acidic residues; sequence EDEERKRVEQQKNKE. Polar residues predominate over residues 122–138; the sequence is NASTSAPTSSRNGGQSV. Residues 307-318 show a composition bias toward polar residues; that stretch reads SSSESPTKQSPM. Composition is skewed to low complexity over residues 341–359, 391–404, and 413–456; these read QLQQQQNKMRLMQQQQQEM, QQQQQQQMQQHHQM, and QAHQ…HHQM.

Component of a complex consisting of at least a lin-12/Notch intracellular domain (NICD), lag-1, and lag-3. Interacts with a NICD of lin-12/Notch or glp-1/Notch; the interactions are direct. In terms of tissue distribution, expressed in the progenitor zone and the early pachytene region of the hermaphrodite gonad.

The protein resides in the nucleus. Functionally, glp-1/Notch and lin-12/Notch proteins promote signaling by recruiting lag-3 to target promoters, where it functions as a transcriptional activator, probably as part of a complex with a Notch intracellular domain (NICD) and the transcription regulator lag-1. Involved in the p53-mediated germ-cell apoptotic response to DNA damage, perhaps acting as a transcriptional activator. May regulate phosphatase lip-1 mRNA transcription downstream of glp-1. In Caenorhabditis elegans, this protein is Protein lag-3 (sel-8).